We begin with the raw amino-acid sequence, 209 residues long: NADH-ubiquinone oxidoreductase subunit 9 (209 aa).

Belongs to the complex I 30 kDa subunit family. Complex I is composed of about 30 different subunits.

It localises to the mitochondrion inner membrane. It carries out the reaction a ubiquinone + NADH + 5 H(+)(in) = a ubiquinol + NAD(+) + 4 H(+)(out). Functionally, core subunit of the mitochondrial membrane respiratory chain NADH dehydrogenase (Complex I) that is believed to belong to the minimal assembly required for catalysis. Complex I functions in the transfer of electrons from NADH to the respiratory chain. The immediate electron acceptor for the enzyme is believed to be ubiquinone. The chain is NADH-ubiquinone oxidoreductase subunit 9 (NAD9) from Paramecium primaurelia.